The primary structure comprises 770 residues: Molybdenum cofactor sulfurase (770 aa).

At Lys243 the chain carries N6-(pyridoxal phosphate)lysine. Cys405 is an active-site residue. The MOSC domain maps to 611–769; the sequence is GDEVANWLCQ…LACGDPITVL (159 aa). Ser726 is subject to Phosphoserine.

It belongs to the class-V pyridoxal-phosphate-dependent aminotransferase family. MOCOS subfamily. Pyridoxal 5'-phosphate is required as a cofactor.

It carries out the reaction Mo-molybdopterin + L-cysteine + AH2 = thio-Mo-molybdopterin + L-alanine + A + H2O. It participates in cofactor biosynthesis; molybdopterin biosynthesis. Its function is as follows. Sulfurates the molybdenum cofactor. Sulfation of molybdenum is essential for xanthine dehydrogenase (XDH) and aldehyde oxidase (ADO) enzymes in which molybdenum cofactor is liganded by 1 oxygen and 1 sulfur atom in active form. This Drosophila grimshawi (Hawaiian fruit fly) protein is Molybdenum cofactor sulfurase.